Reading from the N-terminus, the 212-residue chain is Uridine kinase (212 aa).

An ATP-binding site is contributed by 13-20 (GGSGSGKT).

The protein belongs to the uridine kinase family.

Its subcellular location is the cytoplasm. The catalysed reaction is uridine + ATP = UMP + ADP + H(+). It carries out the reaction cytidine + ATP = CMP + ADP + H(+). It functions in the pathway pyrimidine metabolism; CTP biosynthesis via salvage pathway; CTP from cytidine: step 1/3. Its pathway is pyrimidine metabolism; UMP biosynthesis via salvage pathway; UMP from uridine: step 1/1. The polypeptide is Uridine kinase (Bacillus mycoides (strain KBAB4) (Bacillus weihenstephanensis)).